We begin with the raw amino-acid sequence, 515 residues long: 2-isopropylmalate synthase (515 aa).

The region spanning 5 to 267 (VIIFDTTLRD…STGIKHEEIH (263 aa)) is the Pyruvate carboxyltransferase domain. Residues Asp-14, His-202, His-204, and Asn-238 each coordinate Mn(2+). Residues 392–515 (KLNYLSVQSG…EMKQKKIATV (124 aa)) form a regulatory domain region.

Belongs to the alpha-IPM synthase/homocitrate synthase family. LeuA type 1 subfamily. As to quaternary structure, homodimer. Mn(2+) serves as cofactor.

It localises to the cytoplasm. The catalysed reaction is 3-methyl-2-oxobutanoate + acetyl-CoA + H2O = (2S)-2-isopropylmalate + CoA + H(+). It functions in the pathway amino-acid biosynthesis; L-leucine biosynthesis; L-leucine from 3-methyl-2-oxobutanoate: step 1/4. In terms of biological role, catalyzes the condensation of the acetyl group of acetyl-CoA with 3-methyl-2-oxobutanoate (2-ketoisovalerate) to form 3-carboxy-3-hydroxy-4-methylpentanoate (2-isopropylmalate). The sequence is that of 2-isopropylmalate synthase from Vibrio parahaemolyticus serotype O3:K6 (strain RIMD 2210633).